Here is a 372-residue protein sequence, read N- to C-terminus: Protein zntB (372 aa).

Helical transmembrane passes span 15 to 35 (LIMC…VIFI), 42 to 62 (LLGH…FMDL), and 70 to 90 (IGFY…AVIL). The tract at residues 99 to 166 (ESGDSNHAHS…IAKSKNKKKS (68 aa)) is disordered. A compositionally biased stretch (basic and acidic residues) spans 114–124 (IEKHSSEKKEV). Residues 133-167 (NGKDKKQKQQKQKQQKQQQQQKQNIAKSKNKKKSK) are a coiled coil. Basic residues predominate over residues 137 to 146 (KKQKQQKQKQ). A compositionally biased stretch (low complexity) spans 147–159 (QKQQQQQKQNIAK). 5 helical membrane-spanning segments follow: residues 170–192 (YLNS…EGVA), 207–229 (LMLA…IFSA), 237–257 (FKYC…FGLI), 271–291 (LAAV…PAAF), and 301–321 (FSNI…HSML). The disordered stretch occupies residues 328-372 (AGDGGHGHSHGGHGHSHGHGHSHGGHSHDSQHVESPQSSSFNAFA). A compositionally biased stretch (basic residues) spans 334 to 352 (GHSHGGHGHSHGHGHSHGG). Polar residues predominate over residues 360 to 372 (VESPQSSSFNAFA).

Belongs to the ZIP transporter (TC 2.A.5) family. ZupT subfamily.

The protein resides in the membrane. May transport divalent cations. May participate, with dstA, in the regulation of the differentiation of stalk cells during development. The polypeptide is Protein zntB (zntB) (Dictyostelium discoideum (Social amoeba)).